The sequence spans 184 residues: Isopentenyl-diphosphate Delta-isomerase (184 aa).

2 residues coordinate Mn(2+): histidine 26 and histidine 33. The Nudix hydrolase domain occupies proline 31 to leucine 165. Residue cysteine 68 is part of the active site. Mn(2+) is bound at residue histidine 70. Glutamate 88 contributes to the Mg(2+) binding site. Positions 115 and 117 each coordinate Mn(2+). The active site involves glutamate 117.

It belongs to the IPP isomerase type 1 family. Mg(2+) serves as cofactor. Mn(2+) is required as a cofactor.

The protein resides in the cytoplasm. The catalysed reaction is isopentenyl diphosphate = dimethylallyl diphosphate. Its pathway is isoprenoid biosynthesis; dimethylallyl diphosphate biosynthesis; dimethylallyl diphosphate from isopentenyl diphosphate: step 1/1. Catalyzes the 1,3-allylic rearrangement of the homoallylic substrate isopentenyl (IPP) to its highly electrophilic allylic isomer, dimethylallyl diphosphate (DMAPP). The chain is Isopentenyl-diphosphate Delta-isomerase from Paenarthrobacter aurescens (strain TC1).